Here is a 455-residue protein sequence, read N- to C-terminus: Adenylyltransferase and sulfurtransferase MOCS3 (455 aa).

ATP-binding positions include Gly-90, Asp-111, 118–122 (SNLAR), Lys-135, and 179–180 (DN). The tract at residues 156–236 (AQALTPATAL…RPPPAETVTS (81 aa)) is interaction with NFS1. Cys-220 and Cys-223 together coordinate Zn(2+). The active-site Glycyl thioester intermediate; for adenylyltransferase activity is the Cys-237. The Zn(2+) site is built by Cys-295 and Cys-298. A disulfide bond links Cys-314 and Cys-322. The Rhodanese domain occupies 345–453 (SRSPHLLLDV…WAAKIDGTFP (109 aa)). Cys-410 serves as the catalytic Cysteine persulfide intermediate; for sulfurtransferase activity. Cys-410 carries the post-translational modification Cysteine persulfide.

The protein in the N-terminal section; belongs to the HesA/MoeB/ThiF family. UBA4 subfamily. Interacts with NFS1. Requires Zn(2+) as cofactor.

The protein localises to the cytoplasm. The protein resides in the cytosol. It carries out the reaction [molybdopterin-synthase sulfur-carrier protein]-C-terminal Gly-Gly + ATP + H(+) = [molybdopterin-synthase sulfur-carrier protein]-C-terminal Gly-Gly-AMP + diphosphate. The catalysed reaction is [molybdopterin-synthase sulfur-carrier protein]-C-terminal Gly-Gly-AMP + S-sulfanyl-L-cysteinyl-[cysteine desulfurase] + AH2 = [molybdopterin-synthase sulfur-carrier protein]-C-terminal-Gly-aminoethanethioate + L-cysteinyl-[cysteine desulfurase] + A + AMP + 2 H(+). The protein operates within tRNA modification; 5-methoxycarbonylmethyl-2-thiouridine-tRNA biosynthesis. Its pathway is cofactor biosynthesis; molybdopterin biosynthesis. Its function is as follows. Plays a central role in 2-thiolation of mcm(5)S(2)U at tRNA wobble positions of cytosolic tRNA(Lys), tRNA(Glu) and tRNA(Gln). Also essential during biosynthesis of the molybdenum cofactor. Acts by mediating the C-terminal thiocarboxylation of sulfur carriers URM1 and MOCS2A. Its N-terminus first activates URM1 and MOCS2A as acyl-adenylates (-COAMP), then the persulfide sulfur on the catalytic cysteine is transferred to URM1 and MOCS2A to form thiocarboxylation (-COSH) of their C-terminus. The reaction probably involves hydrogen sulfide that is generated from the persulfide intermediate and that acts as a nucleophile towards URM1 and MOCS2A. Subsequently, a transient disulfide bond is formed. Does not use thiosulfate as sulfur donor; NFS1 acting as a sulfur donor for thiocarboxylation reactions. The polypeptide is Adenylyltransferase and sulfurtransferase MOCS3 (Bos taurus (Bovine)).